Here is a 419-residue protein sequence, read N- to C-terminus: UDP-N-acetylglucosamine 1-carboxyvinyltransferase (419 aa).

22–23 is a binding site for phosphoenolpyruvate; it reads KN. Position 92 (arginine 92) interacts with UDP-N-acetyl-alpha-D-glucosamine. The active-site Proton donor is the cysteine 116. Position 116 is a 2-(S-cysteinyl)pyruvic acid O-phosphothioketal (cysteine 116). Residues 121 to 125, aspartate 307, and leucine 329 contribute to the UDP-N-acetyl-alpha-D-glucosamine site; that span reads RPIDL.

This sequence belongs to the EPSP synthase family. MurA subfamily.

It localises to the cytoplasm. It catalyses the reaction phosphoenolpyruvate + UDP-N-acetyl-alpha-D-glucosamine = UDP-N-acetyl-3-O-(1-carboxyvinyl)-alpha-D-glucosamine + phosphate. It participates in cell wall biogenesis; peptidoglycan biosynthesis. Functionally, cell wall formation. Adds enolpyruvyl to UDP-N-acetylglucosamine. This chain is UDP-N-acetylglucosamine 1-carboxyvinyltransferase, found in Campylobacter fetus subsp. fetus (strain 82-40).